A 409-amino-acid chain; its full sequence is uncharacterized protein (409 aa).

10 helical membrane-spanning segments follow: residues Phe62–Ile82, Leu100–Phe120, Met123–Leu143, Ala152–Ile172, Val183–Val203, Gly252–Phe272, Ala293–Val313, Tyr328–Met348, Val355–Pro375, and Phe376–Trp396.

The protein localises to the cell membrane. This is an uncharacterized protein from Rhizobium meliloti (strain 1021) (Ensifer meliloti).